We begin with the raw amino-acid sequence, 983 residues long: MSTDKKKEEVPKPETEDLTVKDETKNKDKKKANEEEELSEEDQKLKGDLEMLVQTLLEDDSKLYETTLTQLKEFIKNSTSSMTAVPKPLKFLRPFYPDLCKAYDKWSDKDQKSSLADMLSVLAMTYSDTHQHDSLRFRLLSDTSNIASWGHEYVRHLALEIGEVYNEQVEKEAEDNSTSTESSPQPPHMNFEFSKDVILQLSLEIVPYFMKHNGEEDAVDLLLEIEAIEKLPQFVDENTYKRVCQYMIACVQLLPPPEDISFLQTAYSIYLSELQLPEALSLAIRLGNEDMIRSVFDATSDPIVHQQLAYILAAQRVPFEHPELQEIIGNTKLSEHFLYLAKELNLLTPKIPEDIYKSHLDSSKSVFSSAGLDSAQQNLAASFVNAFLNLGYCNDKMITDNDNWVYKTKGDGMTSAVASIGSIYQWNIDGLQQLDKYLYVDEPEVKAGGLLGIGIASAGVHHDVEPALLLLQEYINHSDTKISTAAILGIGIAFAGSKNDEVLGLLLPVVSNTENSLELAAIAALALSHVFVGTCNGDITTAVMDNFLERTPLELKSEWARFLALSLGLLYLGQGEHVDDVLETINAIEHPMTSAIEVLISSCAYTATGDVLLVQDLLHRLTPKAVKSSDEDEDEDNEELSQEDMNGISAFLGKKENEIAEEPQGNEGADNEMEVDSHQDETTTGENNVKKEENEEEKTEKSEKTENDEEEEDEEESKDEGANDELAYAVIGIALITMGEEIGKEMSLRHFGHLMHYGNEHIRRMVPLAMGLVSVADPQMKVFDTLTRFSHDPDLDVSMNSIFAMGLCGVGTNNARLAQLLRQLASYYSREQDALFITRLAQGLVHLGKGTMTMDIFNDAHVLNKVTLASLLTVLVGLISPSFILKHHQLFYMLNSGVRPKFIITLNEEGEQIKVNVRIGQAVETVGQAGKPKTITGWITQSTPVLLGHGERAELENDEYISYTNNIEGVVILKKNPNFQEEE.

Basic and acidic residues predominate over residues 1–26 (MSTDKKKEEVPKPETEDLTVKDETKN). Disordered regions lie at residues 1-44 (MSTD…EDQK) and 169-188 (VEKEAEDNSTSTESSPQPPH). PC repeat units lie at residues 415–447 (SAVASIGSIYQWNIDGLQQLDKYLYVDEPEVKA), 448–484 (GGLLGIGIASAGVHHDVEPALLLLQEYINHSDTKIST), 485–519 (AAILGIGIAFAGSKNDEVLGLLLPVVSNTENSLEL), 520–557 (AAIAALALSHVFVGTCNGDITTAVMDNFLERTPLELKS), and 563–595 (LALSLGLLYLGQGEHVDDVLETINAIEHPMTSA). Disordered regions lie at residues 625–644 (AVKSSDEDEDEDNEELSQED) and 662–724 (EPQG…GAND). The span at 630-642 (DEDEDEDNEELSQ) shows a compositional bias: acidic residues. Over residues 688–705 (NVKKEENEEEKTEKSEKT) the composition is skewed to basic and acidic residues. The segment covering 706–718 (ENDEEEEDEEESK) has biased composition (acidic residues). PC repeat units follow at residues 768–799 (LAMGLVSVADPQMKVFDTLTRFSHDPDLDVSM) and 800–834 (NSIFAMGLCGVGTNNARLAQLLRQLASYYSREQDA).

This sequence belongs to the proteasome subunit S2 family.

Acts as a regulatory subunit of the 26 proteasome which is involved in the ATP-dependent degradation of ubiquitinated proteins. This is 26S proteasome regulatory subunit RPN1 (RPN1) from Candida glabrata (strain ATCC 2001 / BCRC 20586 / JCM 3761 / NBRC 0622 / NRRL Y-65 / CBS 138) (Yeast).